The chain runs to 201 residues: MIAYIEGRVAEVTEQSCVVVTQGGVGYEVHLPSHLLARLPEQGAAVSFYIHTVVREDALELYGFSGWDERQTFLVLISISKVGAKTALAVLSLYRPDDLRRIVADDDVTALTRVSGIGKKSAQHILLELKYKLKVESLPASAGLAAGVPGSVLRDAVQALGNLGYAEEEAAPVLKNILKQDPDLDVSEALRAALKALAKAR.

Residues methionine 1–serine 65 form a domain I region. Positions glycine 66 to glycine 143 are domain II. The interval glycine 143–glycine 147 is flexible linker. Residues valine 148–arginine 201 are domain III.

The protein belongs to the RuvA family. In terms of assembly, homotetramer. Forms an RuvA(8)-RuvB(12)-Holliday junction (HJ) complex. HJ DNA is sandwiched between 2 RuvA tetramers; dsDNA enters through RuvA and exits via RuvB. An RuvB hexamer assembles on each DNA strand where it exits the tetramer. Each RuvB hexamer is contacted by two RuvA subunits (via domain III) on 2 adjacent RuvB subunits; this complex drives branch migration. In the full resolvosome a probable DNA-RuvA(4)-RuvB(12)-RuvC(2) complex forms which resolves the HJ.

It is found in the cytoplasm. The RuvA-RuvB-RuvC complex processes Holliday junction (HJ) DNA during genetic recombination and DNA repair, while the RuvA-RuvB complex plays an important role in the rescue of blocked DNA replication forks via replication fork reversal (RFR). RuvA specifically binds to HJ cruciform DNA, conferring on it an open structure. The RuvB hexamer acts as an ATP-dependent pump, pulling dsDNA into and through the RuvAB complex. HJ branch migration allows RuvC to scan DNA until it finds its consensus sequence, where it cleaves and resolves the cruciform DNA. The protein is Holliday junction branch migration complex subunit RuvA of Oleidesulfovibrio alaskensis (strain ATCC BAA-1058 / DSM 17464 / G20) (Desulfovibrio alaskensis).